The following is a 387-amino-acid chain: Polyadenylate-binding protein RBP45A (387 aa).

RRM domains follow at residues 60–140 (KSLW…WAQA), 154–233 (HTIF…PAAN), and 260–332 (TTIF…WGRS). Positions 329–342 (WGRSPNKQSDQAQW) are enriched in polar residues. Residues 329 to 387 (WGRSPNKQSDQAQWNGGGYYGYPPQPQGGYGYAAQPPTQDPNAYYGGYTGYGNYQQQRQ) are disordered.

The protein belongs to the polyadenylate-binding RBP45 family. In terms of assembly, interacts with the poly(A) tail of mRNA in nucleus. In terms of tissue distribution, mostly expressed in seedlings, and, to a lower extent, in leaves, stems, and flowers. Present in immature anther tissues (tapetum cells) and mature pollen grains.

It is found in the nucleus. Its function is as follows. Heterogeneous nuclear ribonucleoprotein (hnRNP)-protein binding the poly(A) tail of mRNA and probably involved in some steps of pre-mRNA maturation. This is Polyadenylate-binding protein RBP45A (RBP45A) from Arabidopsis thaliana (Mouse-ear cress).